Consider the following 512-residue polypeptide: Maturase K (512 aa).

Belongs to the intron maturase 2 family. MatK subfamily.

The protein localises to the plastid. It is found in the chloroplast. In terms of biological role, usually encoded in the trnK tRNA gene intron. Probably assists in splicing its own and other chloroplast group II introns. This Lilium tsingtauense (Twilight lily) protein is Maturase K.